The chain runs to 491 residues: Glutamate--tRNA ligase (491 aa).

Positions Pro-10 to Gly-20 match the 'HIGH' region motif. The 'KMSKS' region motif lies at Lys-243–Arg-247. Position 246 (Lys-246) interacts with ATP.

This sequence belongs to the class-I aminoacyl-tRNA synthetase family. Glutamate--tRNA ligase type 1 subfamily. As to quaternary structure, monomer.

The protein localises to the cytoplasm. The catalysed reaction is tRNA(Glu) + L-glutamate + ATP = L-glutamyl-tRNA(Glu) + AMP + diphosphate. Functionally, catalyzes the attachment of glutamate to tRNA(Glu) in a two-step reaction: glutamate is first activated by ATP to form Glu-AMP and then transferred to the acceptor end of tRNA(Glu). The chain is Glutamate--tRNA ligase from Desulfotalea psychrophila (strain LSv54 / DSM 12343).